An 881-amino-acid chain; its full sequence is Alanine--tRNA ligase (881 aa).

The protein belongs to the class-II aminoacyl-tRNA synthetase family.

It is found in the cytoplasm. The enzyme catalyses tRNA(Ala) + L-alanine + ATP = L-alanyl-tRNA(Ala) + AMP + diphosphate. Its function is as follows. Catalyzes the attachment of alanine to tRNA(Ala) in a two-step reaction: alanine is first activated by ATP to form Ala-AMP and then transferred to the acceptor end of tRNA(Ala). Also edits incorrectly charged Ser-tRNA(Ala) and Gly-tRNA(Ala) via its editing domain. The polypeptide is Alanine--tRNA ligase (alaS) (Lacticaseibacillus paracasei (strain ATCC 334 / BCRC 17002 / CCUG 31169 / CIP 107868 / KCTC 3260 / NRRL B-441) (Lactobacillus paracasei)).